Here is a 391-residue protein sequence, read N- to C-terminus: UPF0229 protein CLL_A3091 (391 aa).

Disordered stretches follow at residues 1 to 23 and 75 to 107; these read MAIF…DKRR and VATG…GNEE. Residues 80-92 are compositionally biased toward basic and acidic residues; the sequence is GEEKRGDKIESGS.

The protein belongs to the UPF0229 family.

This Clostridium botulinum (strain Eklund 17B / Type B) protein is UPF0229 protein CLL_A3091.